Reading from the N-terminus, the 407-residue chain is Gonadotropin-releasing hormone receptor (407 aa).

Over 1–36 (MDYLNDSMFNNMTYNITSTPLPDAPRFDNVYVSKLC) the chain is Extracellular. 3 N-linked (GlcNAc...) asparagine glycosylation sites follow: Asn5, Asn11, and Asn15. Residues 37–57 (VLGTVFVISFFGNTLVIIQIF) traverse the membrane as a helical segment. The Cytoplasmic portion of the chain corresponds to 58–69 (RIRGSRSTIQSL). A helical transmembrane segment spans residues 70–90 (ILNLAIADLMVSFFNILMDII). Topologically, residues 91 to 105 (WSATVEWLAGNTMCK) are extracellular. An intrachain disulfide couples Cys104 to Cys183. Residues 106-126 (IMKYLTVFGLHLSTYITVSIA) form a helical membrane-spanning segment. Residues 127–147 (LDRCFAILSPMSRSKAPLRVR) are Cytoplasmic-facing. Residues 148–168 (IMITMAWVLSAIFSIPQAVIF) form a helical membrane-spanning segment. Residues 169 to 199 (QEQRKMFRQGMFHQCRDSYNALWQKQLYSAS) are Extracellular-facing. Residues 200-220 (SLILLFVIPLIIMVTSYLLIL) traverse the membrane as a helical segment. Over 221–268 (KTIVKTSRQFHDTPISPTSMSCYSVNHGQIRTHLFERARKRSSRMSAV) the chain is Cytoplasmic. Residues 269 to 289 (IVAAFILCWTPYYIIFLGFAF) form a helical membrane-spanning segment. Residues 290–298 (FQWDNSRTV) are Extracellular-facing. A helical transmembrane segment spans residues 299–319 (IYFFTLGTSNCMLNPLIYGAF). The Cytoplasmic segment spans residues 320-407 (TIYKVHRGRS…NGKMPTKPPG (88 aa)). The interval 377-407 (SLTNPHQPVRPSPGINSTTSPNGKMPTKPPG) is disordered.

Belongs to the G-protein coupled receptor 1 family. As to expression, widely expressed in peripheral nervous tissue, gonadal tissue and brain. In the brain, expression is high in the palliovisceral lobe and superior buccal lobe but low in the subvertical lobe, superior and inferior frontal lobe, posterior brachial lobe and pedal lobe. Expressed in stomach, rectum, aorta, heart, salivary gland, branchia, pancreas, radula retractor muscle, branchial vessel but not in white body, esophagus, liver and kidney.

It is found in the cell membrane. Its function is as follows. Receptor for gonadotropin releasing hormone (GnRH) that mediates the action of GnRH to stimulate the secretion of the gonadotropic hormones luteinizing hormone (LH) and follicle-stimulating hormone (FSH). This receptor mediates its action by association with G-proteins that activate a phosphatidylinositol-calcium second messenger system. Ligand interaction triggers steroidogenesis in spermatozoa and follicles. Appears to be involved in contraction of the radula retractor muscle. This is Gonadotropin-releasing hormone receptor from Octopus vulgaris (Common octopus).